The primary structure comprises 2104 residues: Phenolphthiocerol synthesis polyketide synthase type I Pks15/1 (2104 aa).

The Ketosynthase family 3 (KS3) domain maps to 41-464; sequence TEPVAVVGIG…GTNAHVILEE (424 aa). Active-site for beta-ketoacyl synthase activity residues include cysteine 211, histidine 346, and histidine 386. Residues 571–887 are acyltransferase; it reads TAVVFPGQGS…GQLFSTGMSV (317 aa). Residue serine 662 is the For acyltransferase activity of the active site. Residues 935-1057 are N-terminal hotdog fold; the sequence is HALLGAVVER…GMLGVEAASS (123 aa). A dehydratase region spans residues 935–1095; the sequence is HALLGAVVER…YAYGPGFQGL (161 aa). Positions 935–1207 constitute a PKS/mFAS DH domain; the sequence is HALLGAVVER…TRAMSAAQLR (273 aa). Histidine 967 acts as the Proton acceptor; for dehydratase activity in catalysis. The segment at 1069 to 1207 is C-terminal hotdog fold; it reads AESVDISDGY…TRAMSAAQLR (139 aa). Aspartate 1128 serves as the catalytic Proton donor; for dehydratase activity. Positions 1400–1705 are enoylreductase; the sequence is GTLEDLVIEP…QARHIGKVVL (306 aa). NADP(+)-binding positions include 1530 to 1547 and 1719 to 1734; these read VLIHAGTGGVGMAAVQLA and TVLITGATGAVGAVLA. Residues 1718–1899 form a beta-ketoacyl reductase (KR) region; the sequence is ATVLITGATG…SVAWGLWEQS (182 aa). A Carrier domain is found at 2004-2079; it reads DALVGLVCLQ…AIAEYVGRQI (76 aa). Residue serine 2039 is modified to O-(pantetheine 4'-phosphoryl)serine. Positions 2081–2104 are disordered; it reads DSQATQAEEEKLPESDGEMVSVTA.

It belongs to the thiolase-like superfamily. Beta-ketoacyl-ACP synthases family. Pantetheine 4'-phosphate is required as a cofactor.

It catalyses the reaction a fatty acyl-[ACP] + malonyl-[ACP] + H(+) = a 3-oxoacyl-[ACP] + holo-[ACP] + CO2. The protein operates within lipid metabolism; fatty acid biosynthesis. Functionally, catalyzes the elongation by iterative transfer of p-hydroxybenzoyl group from FadD22 (pHBA-S-FAdD22) to form p-hydroxyphenylalkanoate (pHPA) intermediates during phenolphthiocerol (PPOL) biosynthesis. PPOL is an important intermediate in the biosynthesis of phenolic glycolipid (mycosid B). In Mycobacterium marinum (strain ATCC BAA-535 / M), this protein is Phenolphthiocerol synthesis polyketide synthase type I Pks15/1 (pks15/1).